The following is a 272-amino-acid chain: Activator of basal transcription 1 (272 aa).

At Met1 the chain carries N-acetylmethionine. Positions 1–17 are enriched in basic and acidic residues; that stretch reads MEAEESEKAATEQEPLK. The disordered stretch occupies residues 1 to 38; that stretch reads MEAEESEKAATEQEPLKGTEQTLDAEEEQEESEDAACG. A compositionally biased stretch (acidic residues) spans 23–34; it reads LDAEEEQEESED. One can recognise an RRM domain in the interval 46–142; it reads GIVYLGHIPP…RRRSPFRYDL (97 aa). The stretch at 161 to 191 forms a coiled coil; it reads AFERQVRRQRLRAEVAQAKRETDFYLQSVER. A disordered region spans residues 197-272; sequence AADGDPARPD…MEGPSLVRDS (76 aa).

The protein belongs to the ESF2/ABP1 family. In terms of assembly, interacts with ESF1/ABTAP. Interacts with IGHMBP2.

The protein localises to the nucleus. Its subcellular location is the nucleolus. Could be a novel TATA-binding protein (TBP) which can function as a basal transcription activator. Can act as a regulator of basal transcription for class II genes. In Pongo abelii (Sumatran orangutan), this protein is Activator of basal transcription 1 (ABT1).